The chain runs to 522 residues: 2-isopropylmalate synthase (522 aa).

The 263-residue stretch at 5–267 (VIIFDTTLRD…YTNINAREIH (263 aa)) folds into the Pyruvate carboxyltransferase domain. The Mn(2+) site is built by D14, H202, H204, and N238. A regulatory domain region spans residues 392–522 (VMEQLVVQSD…MQQTRELGGV (131 aa)).

The protein belongs to the alpha-IPM synthase/homocitrate synthase family. LeuA type 1 subfamily. Homodimer. The cofactor is Mn(2+).

It localises to the cytoplasm. The enzyme catalyses 3-methyl-2-oxobutanoate + acetyl-CoA + H2O = (2S)-2-isopropylmalate + CoA + H(+). The protein operates within amino-acid biosynthesis; L-leucine biosynthesis; L-leucine from 3-methyl-2-oxobutanoate: step 1/4. Catalyzes the condensation of the acetyl group of acetyl-CoA with 3-methyl-2-oxobutanoate (2-ketoisovalerate) to form 3-carboxy-3-hydroxy-4-methylpentanoate (2-isopropylmalate). The chain is 2-isopropylmalate synthase from Shewanella amazonensis (strain ATCC BAA-1098 / SB2B).